The primary structure comprises 152 residues: Probable flagellum biosynthesis repressor protein FlbT (152 aa).

This sequence belongs to the FlbT family.

In terms of biological role, has a post-transcriptional repressor function in flagellum biogenesis. Associates with the 5'-UTR of fljK mRNA and promotes its degradation. This chain is Probable flagellum biosynthesis repressor protein FlbT, found in Brucella abortus (strain S19).